The primary structure comprises 144 residues: Large ribosomal subunit protein uL16 (144 aa).

It belongs to the universal ribosomal protein uL16 family. Part of the 50S ribosomal subunit.

Binds 23S rRNA and is also seen to make contacts with the A and possibly P site tRNAs. The protein is Large ribosomal subunit protein uL16 of Erythrobacter litoralis (strain HTCC2594).